The following is a 356-amino-acid chain: Leucine carboxyl methyltransferase 1 (356 aa).

Residues R78, G101, D127, 183 to 184 (DL), and E218 contribute to the S-adenosyl-L-methionine site.

Belongs to the methyltransferase superfamily. LCMT family.

It catalyses the reaction [phosphatase 2A protein]-C-terminal L-leucine + S-adenosyl-L-methionine = [phosphatase 2A protein]-C-terminal L-leucine methyl ester + S-adenosyl-L-homocysteine. Functionally, methylates the carboxyl group of the C-terminal leucine residue of protein phosphatase 2A catalytic subunits to form alpha-leucine ester residues. The chain is Leucine carboxyl methyltransferase 1 (PPM1) from Cryptococcus neoformans var. neoformans serotype D (strain JEC21 / ATCC MYA-565) (Filobasidiella neoformans).